The sequence spans 196 residues: Imidazoleglycerol-phosphate dehydratase (196 aa).

It belongs to the imidazoleglycerol-phosphate dehydratase family.

Its subcellular location is the cytoplasm. It carries out the reaction D-erythro-1-(imidazol-4-yl)glycerol 3-phosphate = 3-(imidazol-4-yl)-2-oxopropyl phosphate + H2O. The protein operates within amino-acid biosynthesis; L-histidine biosynthesis; L-histidine from 5-phospho-alpha-D-ribose 1-diphosphate: step 6/9. This chain is Imidazoleglycerol-phosphate dehydratase, found in Zymomonas mobilis subsp. mobilis (strain ATCC 31821 / ZM4 / CP4).